We begin with the raw amino-acid sequence, 311 residues long: Methionyl-tRNA formyltransferase (311 aa).

110–113 (SLLP) contributes to the (6S)-5,6,7,8-tetrahydrofolate binding site.

This sequence belongs to the Fmt family.

It carries out the reaction L-methionyl-tRNA(fMet) + (6R)-10-formyltetrahydrofolate = N-formyl-L-methionyl-tRNA(fMet) + (6S)-5,6,7,8-tetrahydrofolate + H(+). Attaches a formyl group to the free amino group of methionyl-tRNA(fMet). The formyl group appears to play a dual role in the initiator identity of N-formylmethionyl-tRNA by promoting its recognition by IF2 and preventing the misappropriation of this tRNA by the elongation apparatus. The polypeptide is Methionyl-tRNA formyltransferase (Sulfurihydrogenibium sp. (strain YO3AOP1)).